The following is a 754-amino-acid chain: FAD-dependent monooxygenase ntnA (754 aa).

The chain crosses the membrane as a helical span at residues 3–23; sequence IPFKVLIIGGGVAGLTLAIML. Residues E34, G48, and R109 each contribute to the FAD site. Residue Y218 is part of the active site. FAD contacts are provided by D311 and A324. 4 consecutive transmembrane segments (helical) span residues 446–466, 486–506, 536–556, and 563–583; these read PLAT…PWLA, AEVL…MWVI, ILPI…YYYM, and LGVA…SAVC. N-linked (GlcNAc...) asparagine glycosylation is present at N586. A helical transmembrane segment spans residues 595 to 615; it reads SWWFTADFAFPVVAYLSGMFL. N-linked (GlcNAc...) asparagine glycosylation occurs at N616. 2 consecutive transmembrane segments (helical) span residues 644 to 664 and 679 to 697; these read IAFV…TTIL and LASL…AWEL. N-linked (GlcNAc...) asparagine glycosylation occurs at N701. The chain crosses the membrane as a helical span at residues 712 to 732; that stretch reads LTILSSTIFGGPAATLAGTFI.

This sequence belongs to the paxM FAD-dependent monooxygenase family. It depends on FAD as a cofactor.

It localises to the membrane. Its pathway is secondary metabolite biosynthesis; terpenoid biosynthesis. Functionally, FAD-dependent monooxygenase; part of the gene cluster that mediates the biosynthesis of the meroterpenoids nectripenoids A and B, as well as cochliquninone D and isocochliquninone E. The pathway probably begins with the HR-PKS ntnH that catalyzes two chain-extension steps to form a reduced triketide, which then primes the SAT domain in the NR-PKS ntnG to initiate three more cycles of extension to give a linear hexaketide corresponding to the polyketide part of nectripenoids. The FAD-dependent monooxygenase ntnJ then performs an oxidative decarboxylation at C11 of the ntnH/ntnG product, via an electrophilic aromatic hydroxylation with concomitant ipso-decarboxylation. The membrane-bound polyprenyl transferase ntnF then introduces a farnesyl group before the FAD-dependent monooxygenase ntnK functions as the first epoxidase on terminal C12'-C13' olefin, followed by a second epoxidation on C7'-C8' catalyzed by ntnA. The terpene cyclase/mutase ntnI then initiates the sequential tricyclic ring formation through protonation of the terminal epoxide and catalyzes the regioselective and stereoselective 6/6/6-tricyclic ring formation. The cytochrome P450 monooxygenase ntnM may then hydroxylate C1'. The chain is FAD-dependent monooxygenase ntnA from Nectria sp.